Consider the following 654-residue polypeptide: tRNA 5-methylaminomethyl-2-thiouridine biosynthesis bifunctional protein MnmC (654 aa).

Residues 1 to 236 are tRNA (mnm(5)s(2)U34)-methyltransferase; that stretch reads MPTLLQHAQI…KWEVMSGAYV (236 aa). The FAD-dependent cmnm(5)s(2)U34 oxidoreductase stretch occupies residues 262–654; sequence IGAGLAGSSS…FGLRRLIRGK (393 aa).

It in the N-terminal section; belongs to the methyltransferase superfamily. tRNA (mnm(5)s(2)U34)-methyltransferase family. The protein in the C-terminal section; belongs to the DAO family. Requires FAD as cofactor.

The protein localises to the cytoplasm. It carries out the reaction 5-aminomethyl-2-thiouridine(34) in tRNA + S-adenosyl-L-methionine = 5-methylaminomethyl-2-thiouridine(34) in tRNA + S-adenosyl-L-homocysteine + H(+). In terms of biological role, catalyzes the last two steps in the biosynthesis of 5-methylaminomethyl-2-thiouridine (mnm(5)s(2)U) at the wobble position (U34) in tRNA. Catalyzes the FAD-dependent demodification of cmnm(5)s(2)U34 to nm(5)s(2)U34, followed by the transfer of a methyl group from S-adenosyl-L-methionine to nm(5)s(2)U34, to form mnm(5)s(2)U34. The protein is tRNA 5-methylaminomethyl-2-thiouridine biosynthesis bifunctional protein MnmC of Pseudomonas putida (strain ATCC 47054 / DSM 6125 / CFBP 8728 / NCIMB 11950 / KT2440).